Consider the following 558-residue polypeptide: Phosphatidylserine lipase ABHD16A (558 aa).

Helical transmembrane passes span 60-80 and 93-113; these read ILAL…FAFF and VVPF…VACL. Topologically, residues 114-558 are cytoplasmic; sequence RGIGRWTNPQ…AQNFQMPWHL (445 aa). The region spanning 281–407 is the AB hydrolase-1 domain; it reads LVICCEGNAG…LVTRTVRQHL (127 aa). Active-site charge relay system residues include Ser355, Asp430, and His507.

Belongs to the AB hydrolase superfamily. ABHD16 family.

The protein localises to the membrane. The enzyme catalyses 1-heptadecanoyl-2-(5Z,8Z,11Z,14Z-eicosatetraenoyl)-sn-glycero-3-phosphoserine + H2O = 1-heptadecanoyl-sn-glycero-3-phosphoserine + (5Z,8Z,11Z,14Z)-eicosatetraenoate + H(+). It catalyses the reaction 1-hexadecanoyl-2-(9Z-octadecenoyl)-sn-glycero-3-phospho-L-serine + H2O = 1-hexadecanoyl-sn-glycero-3-phospho-L-serine + (9Z)-octadecenoate + H(+). It carries out the reaction 1-octadecanoyl-2-(9Z,12Z-octadecadienoyl)-sn-glycero-3-phosphoserine + H2O = 1-octadecanoyl-sn-glycero-3-phosphoserine + (9Z,12Z)-octadecadienoate + H(+). The catalysed reaction is 1-heptadecanoyl-2-(5Z,8Z,11Z,14Z-eicosatetraenoyl)-sn-glycero-3-phosphocholine + H2O = 1-heptadecanoyl-sn-glycero-3-phosphocholine + (5Z,8Z,11Z,14Z)-eicosatetraenoate + H(+). The enzyme catalyses 1-hexadecanoyl-2-(9Z-octadecenoyl)-sn-glycero-3-phosphoglycerol + H2O = 1-hexadecanoyl-sn-glycero-3-phosphoglycerol + (9Z)-octadecenoate + H(+). It catalyses the reaction 1-hexadecanoyl-2-(9Z-octadecenoyl)-sn-glycero-3-phospho-(1D-myo-inositol) + H2O = 1-hexadecanoyl-sn-glycero-3-phospho-(1D-myo-inositol) + (9Z)-octadecenoate + H(+). It carries out the reaction 1-heptadecanoyl-2-(5Z,8Z,11Z,14Z-eicosatetraenoyl)-sn-glycero-3-phosphoethanolamine + H2O = 1-heptadecanoyl-sn-glycero-3-phosphoethanolamine + (5Z,8Z,11Z,14Z)-eicosatetraenoate + H(+). The catalysed reaction is 1-hexadecanoyl-2-(9Z-octadecenoyl)-sn-glycero-3-phospho-(1'-sn-glycerol) + H2O = 1-hexadecanoyl-sn-glycero-3-phospho-(1'-sn-glycerol) + (9Z)-octadecenoate + H(+). The enzyme catalyses Hydrolyzes glycerol monoesters of long-chain fatty acids.. It catalyses the reaction 1-tetradecanoylglycerol + H2O = tetradecanoate + glycerol + H(+). It carries out the reaction 2-hexadecanoylglycerol + H2O = glycerol + hexadecanoate + H(+). The catalysed reaction is 1-(9Z-octadecenoyl)-glycerol + H2O = glycerol + (9Z)-octadecenoate + H(+). The enzyme catalyses 2-(9Z-octadecenoyl)-glycerol + H2O = glycerol + (9Z)-octadecenoate + H(+). It catalyses the reaction 2-(9Z,12Z-octadecadienoyl)-glycerol + H2O = (9Z,12Z)-octadecadienoate + glycerol + H(+). It carries out the reaction 1-(5Z,8Z,11Z,14Z-eicosatetraenoyl)-glycerol + H2O = glycerol + (5Z,8Z,11Z,14Z)-eicosatetraenoate + H(+). The catalysed reaction is 2-(5Z,8Z,11Z,14Z-eicosatetraenoyl)-glycerol + H2O = glycerol + (5Z,8Z,11Z,14Z)-eicosatetraenoate + H(+). The enzyme catalyses prostaglandin D2-1-glycerol ester + H2O = prostaglandin D2 + glycerol + H(+). It catalyses the reaction 2-glyceryl-15-deoxy-Delta(12,14)-prostaglandin J2 + H2O = 15-deoxy-Delta(12,14)-prostaglandin J2 + glycerol + H(+). It carries out the reaction 1-(9Z,12Z-octadecadienoyl)-glycerol + H2O = (9Z,12Z)-octadecadienoate + glycerol + H(+). With respect to regulation, inhibited by beta-lactone-based lipid inhibitors, such as beta-lactone palmostatin-B. In terms of biological role, phosphatidylserine (PS) lipase that mediates the hydrolysis of phosphatidylserine to generate lysophosphatidylserine (LPS). LPS constitutes a class of signaling lipids that regulates immunological and neurological processes. Has no activity towards diacylglycerol, triacylglycerol or lysophosphatidylserine lipase. Also has monoacylglycerol lipase activity, with preference for 1-(9Z,12Z-octadecadienoyl)-glycerol (1-LG) and 2-glyceryl-15-deoxy-Delta(12,14)-prostaglandin J2 (15d-PGJ(2)-G). The chain is Phosphatidylserine lipase ABHD16A from Homo sapiens (Human).